Consider the following 1794-residue polypeptide: Protein TIC 214 (1794 aa).

6 consecutive transmembrane segments (helical) span residues 19-39 (IINS…FSIG), 68-88 (FIAG…HLAL), 91-111 (PHTI…WNNH), 133-153 (VFLN…SSML), 176-196 (VGWL…LVWI), and 227-247 (IFSI…PSPI).

The protein belongs to the TIC214 family. Part of the Tic complex.

It localises to the plastid. Its subcellular location is the chloroplast inner membrane. Functionally, involved in protein precursor import into chloroplasts. May be part of an intermediate translocation complex acting as a protein-conducting channel at the inner envelope. This is Protein TIC 214 from Olimarabidopsis pumila (Dwarf rocket).